Here is a 458-residue protein sequence, read N- to C-terminus: uncharacterized protein (458 aa).

Positions 5 to 65 (QAPVNKNDVV…KGYGFGRVLN (61 aa)) constitute a TRAM domain. [4Fe-4S] cluster is bound by residues C78, C84, C87, and C165. S-adenosyl-L-methionine contacts are provided by Q289, Y318, E339, and D387. The active-site Nucleophile is C414.

The protein belongs to the class I-like SAM-binding methyltransferase superfamily. RNA M5U methyltransferase family.

This is an uncharacterized protein from Halalkalibacterium halodurans (strain ATCC BAA-125 / DSM 18197 / FERM 7344 / JCM 9153 / C-125) (Bacillus halodurans).